The following is a 157-amino-acid chain: Ribosome maturation factor RimP (157 aa).

This sequence belongs to the RimP family.

The protein localises to the cytoplasm. Required for maturation of 30S ribosomal subunits. In Streptococcus thermophilus (strain ATCC BAA-491 / LMD-9), this protein is Ribosome maturation factor RimP.